Consider the following 129-residue polypeptide: Snaclec coagulation factor IX/factor X-binding protein subunit B3 (129 aa).

The N-terminal stretch at 1–8 is a signal peptide; sequence LSLSGTAA. 3 disulfide bridges follow: cysteine 10–cysteine 21, cysteine 38–cysteine 127, and cysteine 104–cysteine 119. The 112-residue stretch at 17–128 folds into the C-type lectin domain; the sequence is YEGHCYKPFN…CRMMANFVCE (112 aa).

This sequence belongs to the snaclec family. As to quaternary structure, heterodimer of subunits A and B3; disulfide-linked. As to expression, expressed by the venom gland.

It is found in the secreted. Anticoagulant protein which binds to the gamma-carboxyglutamic acid-domain regions of factors IX (F9) and factor X (F10) in the presence of calcium with a 1 to 1 stoichiometry. The chain is Snaclec coagulation factor IX/factor X-binding protein subunit B3 from Trimeresurus stejnegeri (Chinese green tree viper).